A 220-amino-acid chain; its full sequence is Flavin-dependent thymidylate synthase (220 aa).

Positions 1 to 208 (MKIDILDKGF…PWTFEAFLKY (208 aa)) constitute a ThyX domain. Residues threonine 55, 78-81 (RHRI), and glutamate 86 each bind FAD. Residues 75 to 78 (QWFR), 86 to 90 (ELSGR), and arginine 147 contribute to the dUMP site. The ThyX motif signature appears at 78–88 (RHRIASYNELS). FAD-binding positions include 163 to 165 (NAR) and asparagine 169. Arginine 174 is a dUMP binding site. Arginine 174 (involved in ionization of N3 of dUMP, leading to its activation) is an active-site residue.

The protein belongs to the thymidylate synthase ThyX family. Homotetramer. The cofactor is FAD.

The catalysed reaction is dUMP + (6R)-5,10-methylene-5,6,7,8-tetrahydrofolate + NADPH + H(+) = dTMP + (6S)-5,6,7,8-tetrahydrofolate + NADP(+). It carries out the reaction dUMP + formaldehyde + NADPH + H(+) = dTMP + NADP(+) + H2O. Its pathway is pyrimidine metabolism; dTTP biosynthesis. Functionally, catalyzes the reductive methylation of 2'-deoxyuridine-5'-monophosphate (dUMP or deoxyuridylate) to 2'-deoxythymidine-5'-monophosphate (dTMP or deoxythymidylate) while utilizing 5,10-methylenetetrahydrofolate (mTHF) as the methylene donor, and NAD(P)H and FADH(2) as the reductant. This reaction is a critical step in DNA biosynthesis. Can also use formaldehyde instead of mTHF as a direct methylene donor for dTMP synthesis. However, the tighter binding of ThyX to mTHF (KD of 4 uM) compared to formaldehyde (KD of 20 mM) confirms that methylene tetrahydrofolate acts as the biological carbon donor for ThyX, serving as a formaldehyde carrier/transporter and thus avoiding genotoxic effects. In Thermotoga maritima (strain ATCC 43589 / DSM 3109 / JCM 10099 / NBRC 100826 / MSB8), this protein is Flavin-dependent thymidylate synthase.